The primary structure comprises 254 residues: 5'-methylthioadenosine/S-adenosylhomocysteine nucleosidase (254 aa).

Met1 bears the N-acetylmethionine mark. The active-site Proton acceptor is the Glu25. Residues Thr103 and 186–189 (KDME) contribute to the S-methyl-5'-thioadenosine site. Adenine contacts are provided by Lys186 and Asp212. The Proton donor role is filled by Asp212.

Belongs to the PNP/UDP phosphorylase family. MtnN subfamily. In terms of assembly, homodimer.

It catalyses the reaction S-methyl-5'-thioadenosine + H2O = 5-(methylsulfanyl)-D-ribose + adenine. The enzyme catalyses S-adenosyl-L-homocysteine + H2O = S-(5-deoxy-D-ribos-5-yl)-L-homocysteine + adenine. It carries out the reaction 5'-deoxyadenosine + H2O = 5-deoxy-D-ribose + adenine. Its pathway is amino-acid biosynthesis; L-methionine biosynthesis via salvage pathway; S-methyl-5-thio-alpha-D-ribose 1-phosphate from S-methyl-5'-thioadenosine (hydrolase route): step 1/2. Functionally, enzyme of the methionine cycle that catalyzes the irreversible cleavage of the glycosidic bond in 5'-methylthioadenosine (MTA) and S-adenosylhomocysteine (SAH/AdoHcy) to a lesser extent, to adenine and the corresponding thioribose, 5'-methylthioribose and S-ribosylhomocysteine, respectively. Contributes to the maintenance of AdoMet homeostasis and is required to sustain high rates of ethylene synthesis. The protein is 5'-methylthioadenosine/S-adenosylhomocysteine nucleosidase (MTN2) of Arabidopsis thaliana (Mouse-ear cress).